Reading from the N-terminus, the 624-residue chain is Carbon monoxide dehydrogenase (624 aa).

Residues cysteine 37, cysteine 46, cysteine 49, cysteine 54, and cysteine 65 each coordinate [4Fe-4S] cluster. 6 residues coordinate [Ni-4Fe-5S] cluster: histidine 256, cysteine 292, cysteine 336, cysteine 444, cysteine 475, and cysteine 516.

The protein belongs to the Ni-containing carbon monoxide dehydrogenase family. In terms of assembly, homodimer. [4Fe-4S] cluster is required as a cofactor. The cofactor is [Ni-4Fe-5S] cluster.

The catalysed reaction is CO + 2 oxidized [2Fe-2S]-[ferredoxin] + H2O = 2 reduced [2Fe-2S]-[ferredoxin] + CO2 + 2 H(+). In terms of biological role, CODH oxidizes carbon monoxide coupled, via CooF, to the reduction of a hydrogen cation by a hydrogenase (possibly CooH). In Methanocaldococcus jannaschii (strain ATCC 43067 / DSM 2661 / JAL-1 / JCM 10045 / NBRC 100440) (Methanococcus jannaschii), this protein is Carbon monoxide dehydrogenase (cooS).